A 481-amino-acid chain; its full sequence is Glutamate mutase epsilon subunit (481 aa).

Arg-67 contributes to the L-glutamate binding site. Gly-69 provides a ligand contact to adenosylcob(III)alamin. Arg-99 is a binding site for L-glutamate. Asn-122 contacts adenosylcob(III)alamin. L-glutamate contacts are provided by residues Arg-148 to His-149, Glu-170, and Tyr-176. Pro-179 provides a ligand contact to adenosylcob(III)alamin. Residue Tyr-180 participates in L-glutamate binding. Phe-296, Lys-325, Glu-329, and Ile-333 together coordinate adenosylcob(III)alamin.

This sequence belongs to the methylaspartate mutase GlmE subunit family. As to quaternary structure, heterotetramer composed of 2 epsilon subunits (GlmE) and 2 sigma subunits (GlmS). GlmE exists as a homodimer and GlmS as a monomer. Requires adenosylcob(III)alamin as cofactor.

It carries out the reaction (2S,3S)-3-methyl-L-aspartate = L-glutamate. Its pathway is amino-acid degradation; L-glutamate degradation via mesaconate pathway; acetate and pyruvate from L-glutamate: step 1/4. Its function is as follows. Catalyzes the carbon skeleton rearrangement of L-glutamate to L-threo-3-methylaspartate ((2S,3S)-3-methylaspartate). This Yersinia enterocolitica serotype O:8 / biotype 1B (strain NCTC 13174 / 8081) protein is Glutamate mutase epsilon subunit.